Reading from the N-terminus, the 301-residue chain is tRNA dimethylallyltransferase (301 aa).

8–15 (GPTAVGKT) serves as a coordination point for ATP. Residue 10-15 (TAVGKT) coordinates substrate. The segment at 33-36 (DSRQ) is interaction with substrate tRNA.

Belongs to the IPP transferase family. In terms of assembly, monomer. It depends on Mg(2+) as a cofactor.

The enzyme catalyses adenosine(37) in tRNA + dimethylallyl diphosphate = N(6)-dimethylallyladenosine(37) in tRNA + diphosphate. In terms of biological role, catalyzes the transfer of a dimethylallyl group onto the adenine at position 37 in tRNAs that read codons beginning with uridine, leading to the formation of N6-(dimethylallyl)adenosine (i(6)A). This is tRNA dimethylallyltransferase from Thermosipho melanesiensis (strain DSM 12029 / CIP 104789 / BI429).